Reading from the N-terminus, the 451-residue chain is GTPase Der (451 aa).

EngA-type G domains lie at 5–170 (PVVA…VAPP) and 186–359 (IKLA…AAAF). GTP-binding positions include 11-18 (GRPNVGKS), 58-62 (DTGGF), 122-125 (NKAE), 192-199 (GRPNVGKS), 239-243 (DTAGL), and 304-307 (NKWD). Residues 360-444 (AKLSTPRLTR…PLRIEFKSSR (85 aa)) enclose the KH-like domain.

Belongs to the TRAFAC class TrmE-Era-EngA-EngB-Septin-like GTPase superfamily. EngA (Der) GTPase family. As to quaternary structure, associates with the 50S ribosomal subunit.

Its function is as follows. GTPase that plays an essential role in the late steps of ribosome biogenesis. This chain is GTPase Der, found in Bordetella bronchiseptica (strain ATCC BAA-588 / NCTC 13252 / RB50) (Alcaligenes bronchisepticus).